Consider the following 166-residue polypeptide: NADPH-dependent 7-cyano-7-deazaguanine reductase (166 aa).

The Thioimide intermediate role is filled by Cys-57. Asp-64 (proton donor) is an active-site residue. Substrate-binding positions include Val-79–Ser-81 and His-98–Glu-99.

It belongs to the GTP cyclohydrolase I family. QueF type 1 subfamily.

It is found in the cytoplasm. It carries out the reaction 7-aminomethyl-7-carbaguanine + 2 NADP(+) = 7-cyano-7-deazaguanine + 2 NADPH + 3 H(+). The protein operates within tRNA modification; tRNA-queuosine biosynthesis. Its function is as follows. Catalyzes the NADPH-dependent reduction of 7-cyano-7-deazaguanine (preQ0) to 7-aminomethyl-7-deazaguanine (preQ1). The sequence is that of NADPH-dependent 7-cyano-7-deazaguanine reductase from Staphylococcus aureus (strain JH1).